We begin with the raw amino-acid sequence, 311 residues long: uncharacterized protein (311 aa).

This is an uncharacterized protein from Bacillus anthracis.